The primary structure comprises 238 residues: 1-(5-phosphoribosyl)-5-[(5-phosphoribosylamino)methylideneamino] imidazole-4-carboxamide isomerase (238 aa).

Aspartate 8 (proton acceptor) is an active-site residue. The Proton donor role is filled by aspartate 127.

The protein belongs to the HisA/HisF family.

The protein resides in the cytoplasm. It carries out the reaction 1-(5-phospho-beta-D-ribosyl)-5-[(5-phospho-beta-D-ribosylamino)methylideneamino]imidazole-4-carboxamide = 5-[(5-phospho-1-deoxy-D-ribulos-1-ylimino)methylamino]-1-(5-phospho-beta-D-ribosyl)imidazole-4-carboxamide. It participates in amino-acid biosynthesis; L-histidine biosynthesis; L-histidine from 5-phospho-alpha-D-ribose 1-diphosphate: step 4/9. The polypeptide is 1-(5-phosphoribosyl)-5-[(5-phosphoribosylamino)methylideneamino] imidazole-4-carboxamide isomerase (Nitratiruptor sp. (strain SB155-2)).